The chain runs to 513 residues: HMG box-containing protein 1 (513 aa).

The segment at 151-181 is disordered; it reads RPPPVSSAKSGPAFPHDHWKEETPVRHERAN. Basic and acidic residues predominate over residues 165 to 181; sequence PHDHWKEETPVRHERAN. The region spanning 202-343 is the AXH domain; that stretch reads WCNSWPSTVW…PPGHPDAINF (142 aa). The segment at residues 433-501 is a DNA-binding region (HMG box); the sequence is CKRPMNAFML…EQKRLNPDCW (69 aa).

In terms of assembly, binds TCF4. Binds RB1. Binds the second PAH repeat of SIN3A. Ubiquitinated by the CTLH E3 ubiquitin-protein ligase complex, leading to subsequent proteasomal degradation. Highly expressed in liver, adipose tissue, lung, brain, spleen, kidney, skeletal muscle and heart.

It localises to the nucleus. Functionally, transcriptional repressor that binds to the promoter region of target genes. Plays a role in the regulation of the cell cycle and of the Wnt pathway. Binds preferentially to the sequence 5'-TTCATTCATTCA-3'. Binding to the histone H1.0 promoter is enhanced by interaction with RB1. Disrupts the interaction between DNA and TCF4. This is HMG box-containing protein 1 (Hbp1) from Rattus norvegicus (Rat).